The sequence spans 277 residues: MLKGVENHSLPRTAAFFDLDKTVIAKSSTLTFSKSFYQGGLINRRAVLRTAYAQFVFLAGGADHDQMERMRAYLSALCRGWNVQQVKEIVAETLHDLIDPIIYDEAASLIEEHHTAGRDVVIVSTSGAEVVEPIGELLGADRVVATRMVVGDDGCFTGEVEYYAYGPTKAEAIRELAASEGYDLSRCYAYSDSATDVPMLESVGRPHAVNPDRALRREALARGWPILDFHRPVRLKQRIPGFSVPPRPALVAVAAIGAAAATAGLVWYANRRRANVA.

Mg(2+)-binding residues include Asp-18, Asp-20, and Asp-192.

The protein belongs to the HAD-like hydrolase superfamily. SerB family.

The protein is Inhibition of morphological differentiation protein of Streptomyces azureus.